We begin with the raw amino-acid sequence, 407 residues long: MMEKHFVGSEIGQLRSVMLHRPNLSLKRLTPSNCQELLFDDVLSVERAGEEHDIFANTLRQQGVEVLLLTDLLTQTLDVPDAKTWLLDTQISDYRLGPTFAADIRAWLADMSHRELARHLSGGLTYGEIPASIKNMVVDTHDINDFIMKPLPNHLFTRDTSCWIYNGVSINPMAKPARQRETNNLRAIYRWHPQFADGDFIKYFGDENINYDHATLEGGDVLVIGRGAVLIGMSERTTPQGIEFLAQALFKHRQAERVIAVELPKHRSCMHLDTVMTHIDIDAFSVYPEVVRPDVQCWTLTPDGHGGLKRTQENTLVHALEKALGIDQVRLITTGGDAFEAEREQWNDANNVLTLRPGVVVGYERNIWTNEKYDKAGITVLPIPGDELGRGRGGARCMSCPLERDGI.

The active-site Amidino-cysteine intermediate is C397.

The protein belongs to the arginine deiminase family.

Its subcellular location is the cytoplasm. The catalysed reaction is L-arginine + H2O = L-citrulline + NH4(+). It functions in the pathway amino-acid degradation; L-arginine degradation via ADI pathway; carbamoyl phosphate from L-arginine: step 1/2. This chain is Arginine deiminase, found in Salmonella arizonae (strain ATCC BAA-731 / CDC346-86 / RSK2980).